The chain runs to 877 residues: Alanine--tRNA ligase (877 aa).

Zn(2+) is bound by residues His567, His571, Cys669, and His673.

It belongs to the class-II aminoacyl-tRNA synthetase family. Requires Zn(2+) as cofactor.

It localises to the cytoplasm. The enzyme catalyses tRNA(Ala) + L-alanine + ATP = L-alanyl-tRNA(Ala) + AMP + diphosphate. In terms of biological role, catalyzes the attachment of alanine to tRNA(Ala) in a two-step reaction: alanine is first activated by ATP to form Ala-AMP and then transferred to the acceptor end of tRNA(Ala). Also edits incorrectly charged Ser-tRNA(Ala) and Gly-tRNA(Ala) via its editing domain. The protein is Alanine--tRNA ligase of Lactobacillus delbrueckii subsp. bulgaricus (strain ATCC 11842 / DSM 20081 / BCRC 10696 / JCM 1002 / NBRC 13953 / NCIMB 11778 / NCTC 12712 / WDCM 00102 / Lb 14).